A 395-amino-acid chain; its full sequence is RNA ligase 1 (395 aa).

Residues tyrosine 48, arginine 65, and lysine 83 each coordinate ATP. Lysine 113 functions as the N6-AMP-lysine intermediate in the catalytic mechanism. Glutamate 173, lysine 255, and lysine 257 together coordinate ATP. A Mg(2+)-binding site is contributed by aspartate 285.

Mg(2+) serves as cofactor. It depends on Mn(2+) as a cofactor.

The enzyme catalyses ATP + (ribonucleotide)n-3'-hydroxyl + 5'-phospho-(ribonucleotide)m = (ribonucleotide)n+m + AMP + diphosphate.. Functionally, RNA ligase that ligates single-stranded nucleic acids in an ATP-dependent manner. Catalyzes both inter- and intra-molecular single-stranded DNA (ssDNA) ligation to &gt;50% completion in a matter of hours at an elevated temperature, although favoring intra-molecular ligation on RNA and single-stranded DNA substrates. Is able to catalyze the adenylation reaction of ssDNA 3'-terminal phosphate (ssDNA 3'p) to 3'-adenylated DNA (ssDNA 3'pp5'A). Does not have significant 3'-adenylation activity with a 3'-phosphorylated nicked dsDNA substrate. This is RNA ligase 1 from Thermus scotoductus.